Consider the following 115-residue polypeptide: NADH-ubiquinone oxidoreductase chain 3 (115 aa).

The next 3 membrane-spanning stretches (helical) occupy residues 3-23 (LMLA…IMFW), 55-75 (FFLV…LLSL), and 84-104 (LPTM…SLAY).

This sequence belongs to the complex I subunit 3 family. Core subunit of respiratory chain NADH dehydrogenase (Complex I) which is composed of 45 different subunits. Interacts with TMEM186. Interacts with TMEM242.

The protein localises to the mitochondrion inner membrane. It catalyses the reaction a ubiquinone + NADH + 5 H(+)(in) = a ubiquinol + NAD(+) + 4 H(+)(out). In terms of biological role, core subunit of the mitochondrial membrane respiratory chain NADH dehydrogenase (Complex I) which catalyzes electron transfer from NADH through the respiratory chain, using ubiquinone as an electron acceptor. Essential for the catalytic activity of complex I. This chain is NADH-ubiquinone oxidoreductase chain 3, found in Papio hamadryas (Hamadryas baboon).